A 323-amino-acid polypeptide reads, in one-letter code: Viral cathepsin (323 aa).

The signal sequence occupies residues M1–S16. Positions A17 to G112 are cleaved as a propeptide — activation peptide. Intrachain disulfides connect C133-C174, C167-C207, and C262-C310. Residue C136 is part of the active site. N158 carries an N-linked (GlcNAc...) asparagine; by host glycan. Catalysis depends on residues H269 and N289.

It belongs to the peptidase C1 family. As to quaternary structure, interacts with chitinase/CHIA; this interaction maintains VCATH in the host endoplasmic reticulum. Synthesized as an inactive proenzyme and activated by proteolytic removal of the inhibitory propeptide.

The protein resides in the host endoplasmic reticulum. It catalyses the reaction Endopeptidase of broad specificity, hydrolyzing substrates of both cathepsin L and cathepsin B.. Cysteine protease that plays an essential role in host liquefaction to facilitate horizontal transmission of the virus. Accumulates within infected cells as an inactive proenzyme (proV-CATH), which is activated by proteolytic cleavage upon cell death. This chain is Viral cathepsin (VCATH), found in Lepidoptera (butterflies and moths).